The sequence spans 860 residues: Beta-glucosidase 1 (860 aa).

An N-terminal signal peptide occupies residues 1–19 (MKLSWLEAAALTAASVVSA). Residues Asn61, Asn211, and Asn252 are each glycosylated (N-linked (GlcNAc...) asparagine). Asp280 is a catalytic residue. 12 N-linked (GlcNAc...) asparagine glycosylation sites follow: Asn315, Asn322, Asn354, Asn387, Asn442, Asn523, Asn542, Asn564, Asn658, Asn668, Asn690, and Asn712.

Belongs to the glycosyl hydrolase 3 family.

It catalyses the reaction Hydrolysis of terminal, non-reducing beta-D-glucosyl residues with release of beta-D-glucose.. Its pathway is glycan metabolism; cellulose degradation. In Aspergillus aculeatus, this protein is Beta-glucosidase 1.